The chain runs to 130 residues: Small ribosomal subunit protein uS9 (130 aa).

This sequence belongs to the universal ribosomal protein uS9 family.

The polypeptide is Small ribosomal subunit protein uS9 (Shigella sonnei (strain Ss046)).